We begin with the raw amino-acid sequence, 348 residues long: Inositol 2-dehydrogenase/D-chiro-inositol 3-dehydrogenase (348 aa).

The protein belongs to the Gfo/Idh/MocA family. Homotetramer.

It carries out the reaction myo-inositol + NAD(+) = scyllo-inosose + NADH + H(+). The enzyme catalyses 1D-chiro-inositol + NAD(+) = scyllo-inosine + NADH + H(+). The protein operates within polyol metabolism; myo-inositol degradation into acetyl-CoA; acetyl-CoA from myo-inositol: step 1/7. Its function is as follows. Involved in the oxidation of myo-inositol (MI) and D-chiro-inositol (DCI) to 2-keto-myo-inositol (2KMI or 2-inosose) and 1-keto-D-chiro-inositol (1KDCI), respectively. The sequence is that of Inositol 2-dehydrogenase/D-chiro-inositol 3-dehydrogenase from Halalkalibacterium halodurans (strain ATCC BAA-125 / DSM 18197 / FERM 7344 / JCM 9153 / C-125) (Bacillus halodurans).